A 649-amino-acid chain; its full sequence is Cysteine-rich receptor-like protein kinase 2 (649 aa).

The N-terminal stretch at 1-29 is a signal peptide; sequence MKKEPVHILPLYLPCLLMFLLSSLRQITG. Over 30–258 the chain is Extracellular; the sequence is DARARAVKVT…IPRNGRSRGS (229 aa). Gnk2-homologous domains are found at residues 33–134 and 139–245; these read ARAV…NYSF and KGPE…DQDF. N-linked (GlcNAc...) asparagine glycosylation is found at N47, N131, N149, N154, and N214. A helical transmembrane segment spans residues 259–279; that stretch reads VVVIVVSVLSSVVVFMIGVAV. Topologically, residues 280-649 are cytoplasmic; sequence SVYICKRRTI…TVSQSSFYGR (370 aa). Residues 325–608 enclose the Protein kinase domain; it reads FDNANKLGQG…HMLKNKEEVL (284 aa). Residues 331–339 and K353 each bind ATP; that span reads LGQGGFGTV. Y398 carries the post-translational modification Phosphotyrosine. D450 (proton acceptor) is an active-site residue. 2 positions are modified to phosphoserine: S454 and S483. T484 and T489 each carry phosphothreonine. Phosphotyrosine is present on Y497.

Belongs to the protein kinase superfamily. Ser/Thr protein kinase family. CRK subfamily.

Its subcellular location is the membrane. It carries out the reaction L-seryl-[protein] + ATP = O-phospho-L-seryl-[protein] + ADP + H(+). The catalysed reaction is L-threonyl-[protein] + ATP = O-phospho-L-threonyl-[protein] + ADP + H(+). This chain is Cysteine-rich receptor-like protein kinase 2 (CRK2), found in Arabidopsis thaliana (Mouse-ear cress).